The sequence spans 335 residues: Tryptophan--tRNA ligase (335 aa).

ATP-binding positions include 11–13 (QPT) and 19–20 (GN). A 'HIGH' region motif is present at residues 12–20 (PTGNLHLGN). Asp135 is an L-tryptophan binding site. ATP contacts are provided by residues 147–149 (GED), Val189, and 198–202 (KMSKS). The 'KMSKS' region signature appears at 198 to 202 (KMSKS).

Belongs to the class-I aminoacyl-tRNA synthetase family. In terms of assembly, homodimer.

Its subcellular location is the cytoplasm. The enzyme catalyses tRNA(Trp) + L-tryptophan + ATP = L-tryptophyl-tRNA(Trp) + AMP + diphosphate + H(+). Its function is as follows. Catalyzes the attachment of tryptophan to tRNA(Trp). The polypeptide is Tryptophan--tRNA ligase (Nostoc sp. (strain PCC 7120 / SAG 25.82 / UTEX 2576)).